A 649-amino-acid chain; its full sequence is DNA mismatch repair protein MutL (649 aa).

Positions 339–414 (KKKTKDESVQ…VREEESWQST (76 aa)) are disordered. Basic and acidic residues predominate over residues 342-360 (TKDESVQEQFHFEHTKPKE). Over residues 388–402 (PQLWQQPKQEWQPPQ) the composition is skewed to low complexity.

This sequence belongs to the DNA mismatch repair MutL/HexB family.

Functionally, this protein is involved in the repair of mismatches in DNA. It is required for dam-dependent methyl-directed DNA mismatch repair. May act as a 'molecular matchmaker', a protein that promotes the formation of a stable complex between two or more DNA-binding proteins in an ATP-dependent manner without itself being part of a final effector complex. In Bacillus cytotoxicus (strain DSM 22905 / CIP 110041 / 391-98 / NVH 391-98), this protein is DNA mismatch repair protein MutL.